We begin with the raw amino-acid sequence, 90 residues long: ESAT-6-like protein EsxE (90 aa).

The protein belongs to the WXG100 family. ESAT-6 subfamily.

It localises to the secreted. This Mycobacterium tuberculosis (strain CDC 1551 / Oshkosh) protein is ESAT-6-like protein EsxE.